A 442-amino-acid polypeptide reads, in one-letter code: D-serine dehydratase 1 (442 aa).

An N6-(pyridoxal phosphate)lysine modification is found at Lys-118.

It belongs to the serine/threonine dehydratase family. DsdA subfamily. Monomer. Pyridoxal 5'-phosphate serves as cofactor.

It carries out the reaction D-serine = pyruvate + NH4(+). This is D-serine dehydratase 1 from Escherichia coli (strain UTI89 / UPEC).